A 311-amino-acid polypeptide reads, in one-letter code: Methionyl-tRNA formyltransferase (311 aa).

A (6S)-5,6,7,8-tetrahydrofolate-binding site is contributed by 112–115; sequence SLLP.

It belongs to the Fmt family.

It carries out the reaction L-methionyl-tRNA(fMet) + (6R)-10-formyltetrahydrofolate = N-formyl-L-methionyl-tRNA(fMet) + (6S)-5,6,7,8-tetrahydrofolate + H(+). Attaches a formyl group to the free amino group of methionyl-tRNA(fMet). The formyl group appears to play a dual role in the initiator identity of N-formylmethionyl-tRNA by promoting its recognition by IF2 and preventing the misappropriation of this tRNA by the elongation apparatus. This is Methionyl-tRNA formyltransferase from Sinorhizobium medicae (strain WSM419) (Ensifer medicae).